The sequence spans 380 residues: E3 ubiquitin-protein ligase RNF13 (380 aa).

An N-terminal signal peptide occupies residues 1 to 34 (MLLSIGMLMLSATQVYTILTVQLFAFLNLLPVEA). The Lumenal portion of the chain corresponds to 35–182 (DILAYNFENA…VPEFSLPLEY (148 aa)). The PA domain maps to 65–160 (KGFLINSKPE…GESSANSLKD (96 aa)). N-linked (GlcNAc...) asparagine glycosylation occurs at N88. A helical transmembrane segment spans residues 183–203 (YLIPFLIIVGICLILIVIFMI). The Cytoplasmic segment spans residues 204–380 (TKFVQDRHRA…ERDYNIANTV (177 aa)). The RING-type; atypical zinc finger occupies 240–282 (CAICLDEYEDGDKLRILPCSHAYHCKCVDPWLTKTKKTCPVCK). A disordered region spans residues 285-380 (VVPSQGDSDS…ERDYNIANTV (96 aa)). 2 stretches are compositionally biased toward acidic residues: residues 292–304 (SDSD…EENE) and 339–356 (SDYE…AENE).

In terms of assembly, interacts with ERN1. Autoubiquitinated.

The protein resides in the endoplasmic reticulum membrane. It is found in the late endosome membrane. Its subcellular location is the lysosome membrane. It localises to the nucleus inner membrane. The catalysed reaction is S-ubiquitinyl-[E2 ubiquitin-conjugating enzyme]-L-cysteine + [acceptor protein]-L-lysine = [E2 ubiquitin-conjugating enzyme]-L-cysteine + N(6)-ubiquitinyl-[acceptor protein]-L-lysine.. It participates in protein modification; protein ubiquitination. Its function is as follows. E3 ubiquitin-protein ligase that regulates cell proliferation. Involved in apoptosis regulation. Mediates ER stress-induced activation of JNK signaling pathway and apoptosis by promoting ERN1 activation and splicing of XBP1 mRNA. Also involved in protein trafficking and localization. This chain is E3 ubiquitin-protein ligase RNF13 (RNF13), found in Bos taurus (Bovine).